Reading from the N-terminus, the 504-residue chain is Beta-glucosidase 24 (504 aa).

A signal peptide spans 1–18 (MELLWLLLLLLMASSTSS). Glutamine 47 lines the a beta-D-glucoside pocket. Asparagine 75 carries N-linked (GlcNAc...) asparagine glycosylation. A beta-D-glucoside is bound by residues histidine 151 and 196–197 (NE). Glutamate 197 (proton donor) is an active-site residue. Cysteine 216 and cysteine 224 form a disulfide bridge. N-linked (GlcNAc...) asparagine glycosylation occurs at asparagine 329. Tyrosine 340 contacts a beta-D-glucoside. N-linked (GlcNAc...) asparagine glycosylation is present at asparagine 371. Glutamate 411 is a binding site for a beta-D-glucoside. Glutamate 411 functions as the Nucleophile in the catalytic mechanism. N-linked (GlcNAc...) asparagine glycosylation occurs at asparagine 421. A beta-D-glucoside contacts are provided by residues tryptophan 460, 467 to 468 (EW), and phenylalanine 476.

This sequence belongs to the glycosyl hydrolase 1 family.

The enzyme catalyses Hydrolysis of terminal, non-reducing beta-D-glucosyl residues with release of beta-D-glucose.. This chain is Beta-glucosidase 24 (BGLU24), found in Oryza sativa subsp. japonica (Rice).